Reading from the N-terminus, the 202-residue chain is Indolepyruvate oxidoreductase subunit IorB (202 aa).

Heterodimer of the IorA and IorB subunits.

The catalysed reaction is indole-3-pyruvate + 2 oxidized [2Fe-2S]-[ferredoxin] + CoA = (indol-3-yl)acetyl-CoA + 2 reduced [2Fe-2S]-[ferredoxin] + CO2 + H(+). In terms of biological role, catalyzes the ferredoxin-dependent oxidative decarboxylation of arylpyruvates. The polypeptide is Indolepyruvate oxidoreductase subunit IorB (iorB) (Pyrococcus horikoshii (strain ATCC 700860 / DSM 12428 / JCM 9974 / NBRC 100139 / OT-3)).